The chain runs to 675 residues: MQHTFIYDTCLWILSILIDFFFREVKTRGSFRVPRKGPLILVAAPHANQFVDPLILMLQLRREVGRRTSILVAAKSYRQRFIGLMSRAFGAIPVERAQDLAIRGEGKIFVVAEGDKTAIHGKDTLFTKHSVGDTLLLPNNYGSSHIASIKSDTLLYVKREFRGEDAERVLLSPEGSSYKVAPEIDQTYVYNEVRRRLVKGACIALFPEGGSHDRPEMLPLKAGVAIMALETLSQHPDCGLQLLPCGMNYFHPHRFRSRAVLEFGSPLSIPTEYVELYKAKKRREAIQGVLDMIYDALLSVTVQAPDYETLMVIQACRRLYKPAHIQFALPKVVDLNRKLIVGYNHFKHDPRVIRLHDKILLYNRQLYRLGLRDHQVQSLQYSRFMILYKLVYRCCKLFLLALGALPGAILFSPVFIAAHRISVKKAAAALKASSVKIQGRDILATWKLLVALGMTPILYSFYALLCCYYIYSYKLIPHSSIFVYTVPIISTFLFPMVTYAALRFGEVAVDIYKSIRPLFLALIPSKANAVYILKDERKQLVAEVTDLINKLGPELFPDFDPDRITTTIEKPERPSRFARRLSSSVASDVDNLSQLHDTDLNSEVSAPAPLQNVYLYSPNPSALPPSDEEEKDINDKAKLIRNALRQRMGQRMTEIRSRDTPPEEVFSESDEELSD.

The next 4 membrane-spanning stretches (helical) occupy residues Gln2–Phe22, Leu397–Ala417, Leu448–Tyr468, and Ile481–Ala501. 2 disordered regions span residues Tyr616–Asp635 and Gln646–Asp675. Over residues Val665–Asp675 the composition is skewed to acidic residues. Ser669 is modified (phosphoserine).

Belongs to the 1-acyl-sn-glycerol-3-phosphate acyltransferase family.

It localises to the endoplasmic reticulum membrane. This is an uncharacterized protein from Schizosaccharomyces pombe (strain 972 / ATCC 24843) (Fission yeast).